Reading from the N-terminus, the 337-residue chain is Glucan endo-1,3-beta-glucosidase, basic isoform 1 (337 aa).

Glu94 (proton donor) is an active-site residue. The active-site Nucleophile is Glu239. A propeptide spans 315–337 (VSERVWDISAETNSTASSLISEM) (removed in mature form). The N-linked (GlcNAc...) asparagine glycan is linked to Asn327.

Belongs to the glycosyl hydrolase 17 family.

Its subcellular location is the vacuole. It carries out the reaction Hydrolysis of (1-&gt;3)-beta-D-glucosidic linkages in (1-&gt;3)-beta-D-glucans.. Its function is as follows. Is thought to be an important plant defense-related product against fungal pathogens. This chain is Glucan endo-1,3-beta-glucosidase, basic isoform 1 (GLUB1), found in Solanum tuberosum (Potato).